The primary structure comprises 386 residues: Succinate--CoA ligase [ADP-forming] subunit beta (386 aa).

An ATP-grasp domain is found at 9–244 (KQILKKYGAV…LNEEDPTEID (236 aa)). ATP is bound by residues lysine 46, 53 to 55 (GRG), glutamate 99, serine 102, and glutamate 107. Asparagine 199 and aspartate 213 together coordinate Mg(2+). Residues asparagine 264 and 321 to 323 (GIM) each bind substrate.

This sequence belongs to the succinate/malate CoA ligase beta subunit family. As to quaternary structure, heterotetramer of two alpha and two beta subunits. It depends on Mg(2+) as a cofactor.

It catalyses the reaction succinate + ATP + CoA = succinyl-CoA + ADP + phosphate. The catalysed reaction is GTP + succinate + CoA = succinyl-CoA + GDP + phosphate. It participates in carbohydrate metabolism; tricarboxylic acid cycle; succinate from succinyl-CoA (ligase route): step 1/1. Functionally, succinyl-CoA synthetase functions in the citric acid cycle (TCA), coupling the hydrolysis of succinyl-CoA to the synthesis of either ATP or GTP and thus represents the only step of substrate-level phosphorylation in the TCA. The beta subunit provides nucleotide specificity of the enzyme and binds the substrate succinate, while the binding sites for coenzyme A and phosphate are found in the alpha subunit. The chain is Succinate--CoA ligase [ADP-forming] subunit beta from Pelagibacter ubique (strain HTCC1062).